Reading from the N-terminus, the 122-residue chain is Large ribosomal subunit protein uL14 (122 aa).

Belongs to the universal ribosomal protein uL14 family. In terms of assembly, part of the 50S ribosomal subunit. Forms a cluster with proteins L3 and L19. In the 70S ribosome, L14 and L19 interact and together make contacts with the 16S rRNA in bridges B5 and B8.

Its function is as follows. Binds to 23S rRNA. Forms part of two intersubunit bridges in the 70S ribosome. In Lactobacillus delbrueckii subsp. bulgaricus (strain ATCC 11842 / DSM 20081 / BCRC 10696 / JCM 1002 / NBRC 13953 / NCIMB 11778 / NCTC 12712 / WDCM 00102 / Lb 14), this protein is Large ribosomal subunit protein uL14.